A 109-amino-acid polypeptide reads, in one-letter code: Large ribosomal subunit protein eL30 (109 aa).

The protein belongs to the eukaryotic ribosomal protein eL30 family.

This is Large ribosomal subunit protein eL30 (RPL30) from Yarrowia lipolytica (strain CLIB 122 / E 150) (Yeast).